The chain runs to 258 residues: UPF0246 protein YaaA (258 aa).

The protein belongs to the UPF0246 family.

This chain is UPF0246 protein YaaA, found in Escherichia coli (strain K12 / MC4100 / BW2952).